Here is a 238-residue protein sequence, read N- to C-terminus: Protein odd-skipped-related 2 (238 aa).

Residues glutamate 105 to leucine 126 are disordered. 3 consecutive C2H2-type zinc fingers follow at residues phenylalanine 134–histidine 156, tyrosine 162–histidine 184, and phenylalanine 190–histidine 212.

This sequence belongs to the Odd C2H2-type zinc-finger protein family. As to expression, at the 8-somite stage, expressed in the pronephros, with weak generalized expression elsewhere. At 24 hpf, expressed in the kidney tubules and the anterior duct, and also in the gut. At 60 hpf, expressed in the tubules and the pectoral fin buds.

Its subcellular location is the nucleus. Its function is as follows. Transcriptional repressor. Required for pronephric kidney development. This Danio rerio (Zebrafish) protein is Protein odd-skipped-related 2.